A 465-amino-acid polypeptide reads, in one-letter code: FAD-dependent monooxygenase penM (465 aa).

Residues 5 to 25 (QFHVIIVGGSIAGLTLAHCLH) traverse the membrane as a helical segment. The FAD site is built by glutamate 35, glycine 49, arginine 108, aspartate 299, and alanine 312. A helical membrane pass occupies residues 435 to 455 (VLVLLLSALTWSCLGNMNIIM).

The protein belongs to the paxM FAD-dependent monooxygenase family. FAD is required as a cofactor.

The protein localises to the membrane. It functions in the pathway secondary metabolite biosynthesis. FAD-dependent monooxygenase; part of the gene cluster that mediates the biosynthesis of the indole diterpenes penitrems. The geranylgeranyl diphosphate (GGPP) synthase penG catalyzes the first step in penitrem biosynthesis via conversion of farnesyl pyrophosphate and isopentyl pyrophosphate into geranylgeranyl pyrophosphate (GGPP). Condensation of indole-3-glycerol phosphate with GGPP by the prenyl transferase penC then forms 3-geranylgeranylindole (3-GGI). Epoxidation by the FAD-dependent monooxygenase penM leads to a epoxidized-GGI that is substrate of the terpene cyclase penB for cyclization to yield paspaline. Paspaline is subsequently converted to 13-desoxypaxilline by the cytochrome P450 monooxygenase penP, the latter being then converted to paxilline by the cytochrome P450 monooxygenase penQ. Paxilline is converted to beta-paxitriol via C-10 ketoreduction by the short-chain dehydrogenase PC-15 which can be monoprenylated at the C-20 by the indole diterpene prenyltransferase penD. A two-step elimination (acetylation and elimination) process performed by the O-acetyltransferase PC-16 and the P.simplicissimum ptmI-ortholog not yet identified in P.crustosum, leads to the production of the prenylated form of penijanthine. The FAD-linked oxidoreductase ptmO then converts the prenylated form of penijanthine into PC-M5 which is in turn transformed into PC-M4 by the aromatic dimethylallyltransferase PC-22. A series of oxidation steps involving 4 cytochrome P450 monooxygenases (PC-21, PC-05, PC-23, PC-20) and a FAD-dependent monooxygenase (PC-14) are required for the transformation of PC-M4 to penitrems A and E. Synthesis of these final products is proposed to proceed via penitrems D and C (PC-21, PC-05, PC-14) and penitrems B and F (PC-21, PC-05, PC-14, PC-23). The polypeptide is FAD-dependent monooxygenase penM (Penicillium crustosum (Blue mold fungus)).